Consider the following 552-residue polypeptide: Lon protease 2 (552 aa).

97–104 (GPPGVGKT) lines the ATP pocket. In terms of domain architecture, Lon proteolytic spans 349-535 (EPQVGIVNGL…QEVLDEILVN (187 aa)). Catalysis depends on residues S445 and K488.

This sequence belongs to the peptidase S16 family. In terms of assembly, homohexamer. Organized in a ring with a central cavity.

The protein resides in the cytoplasm. It catalyses the reaction Hydrolysis of proteins in presence of ATP.. Functionally, ATP-dependent serine protease that mediates the selective degradation of mutant and abnormal proteins as well as certain short-lived regulatory proteins. Required for cellular homeostasis and for survival from DNA damage and developmental changes induced by stress. Degrades polypeptides processively to yield small peptide fragments that are 5 to 10 amino acids long. Binds to DNA in a double-stranded, site-specific manner. In Bacillus subtilis (strain 168), this protein is Lon protease 2 (lon2).